A 483-amino-acid polypeptide reads, in one-letter code: Protein nucleotidyltransferase YdiU (483 aa).

Positions 87, 89, 90, 110, 122, 123, 173, and 180 each coordinate ATP. D249 acts as the Proton acceptor in catalysis. Positions 250 and 259 each coordinate Mg(2+). Residue D259 participates in ATP binding.

This sequence belongs to the SELO family. Mg(2+) is required as a cofactor. Mn(2+) serves as cofactor.

It carries out the reaction L-seryl-[protein] + ATP = 3-O-(5'-adenylyl)-L-seryl-[protein] + diphosphate. The catalysed reaction is L-threonyl-[protein] + ATP = 3-O-(5'-adenylyl)-L-threonyl-[protein] + diphosphate. The enzyme catalyses L-tyrosyl-[protein] + ATP = O-(5'-adenylyl)-L-tyrosyl-[protein] + diphosphate. It catalyses the reaction L-histidyl-[protein] + UTP = N(tele)-(5'-uridylyl)-L-histidyl-[protein] + diphosphate. It carries out the reaction L-seryl-[protein] + UTP = O-(5'-uridylyl)-L-seryl-[protein] + diphosphate. The catalysed reaction is L-tyrosyl-[protein] + UTP = O-(5'-uridylyl)-L-tyrosyl-[protein] + diphosphate. Nucleotidyltransferase involved in the post-translational modification of proteins. It can catalyze the addition of adenosine monophosphate (AMP) or uridine monophosphate (UMP) to a protein, resulting in modifications known as AMPylation and UMPylation. This Pelagibacter ubique (strain HTCC1062) protein is Protein nucleotidyltransferase YdiU.